Here is a 303-residue protein sequence, read N- to C-terminus: N-acetyl-D-glucosamine kinase (303 aa).

Residues 4 to 11 (GFDIGGTK) and 133 to 140 (GVGGGLIF) contribute to the ATP site. 4 residues coordinate Zn(2+): His157, Cys177, Cys179, and Cys184.

It belongs to the ROK (NagC/XylR) family. NagK subfamily.

The catalysed reaction is N-acetyl-D-glucosamine + ATP = N-acetyl-D-glucosamine 6-phosphate + ADP + H(+). It participates in cell wall biogenesis; peptidoglycan recycling. Its function is as follows. Catalyzes the phosphorylation of N-acetyl-D-glucosamine (GlcNAc) derived from cell-wall degradation, yielding GlcNAc-6-P. The protein is N-acetyl-D-glucosamine kinase of Escherichia coli O7:K1 (strain IAI39 / ExPEC).